The following is a 615-amino-acid chain: Nuclear receptor subfamily 1 group D member 1 (615 aa).

Polar residues predominate over residues 1–12 (MTTLDSNNNTGG). Residues 1–70 (MTTLDSNNNT…TQDPARSFGT (70 aa)) are required for phosphorylation by CSNK1E and cytoplasmic localization. Residues 1–120 (MTTLDSNNNT…SSRVSPSKGT (120 aa)) are disordered. The modulating stretch occupies residues 1 to 129 (MTTLDSNNNT…TSNITKLNGM (129 aa)). A compositionally biased stretch (low complexity) spans 14-34 (ITYIGSSGSSPSRTSPESLYS). Polar residues predominate over residues 35 to 48 (DSSNGSFQSLTQGC). The crucial for activation of GJA1 stretch occupies residues 49–285 (PTYFPPSPTG…PPRSPSPEPT (237 aa)). A phosphoserine; by GSK3-beta mark is found at serine 55 and serine 59. The span at 72–103 (PPSLSDDSSPSSASSSSSSSSSSFYNGSPPGS) shows a compositional bias: low complexity. A DNA-binding region (nuclear receptor) is located at residues 130–206 (VLLCKVCGDV…VGMSRDAVRF (77 aa)). 2 consecutive NR C4-type zinc fingers follow at residues 133-153 (CKVCGDVASGFHYGVHACEGC) and 170-194 (CLKNENCSIVRINRNRCQQCRFKKC). Residues lysine 192 and lysine 193 each carry the N6-acetyllysine; by KAT5 modification. Disordered regions lie at residues 235 to 287 (LCPL…PTVE), 312 to 337 (PGNFNANHASGSPPATTPQCWESQGC), and 357 to 385 (NGLRQGPSSYPPTWPSGPAHHSCHQPNSN). A compositionally biased stretch (pro residues) spans 253–262 (PSPPPAPAPT). Threonine 275 carries the phosphothreonine; by CDK1 modification. In terms of domain architecture, NR LBD spans 285 to 615 (TVEDVISQVA…KLLSFRVDAQ (331 aa)). The residue at position 401 (lysine 401) is an N6-acetyllysine. Residue cysteine 419 coordinates heme. Lysine 592 is modified (N6-acetyllysine). A heme-binding site is contributed by histidine 603.

The protein belongs to the nuclear hormone receptor family. NR1 subfamily. Binds DNA as a monomer or a homodimer. Interacts with C1D, NR2E3, SP1 and ZNHIT1. Interacts with OPHN1 (via C-terminus). Interacts with PER2; the interaction associates PER2 to BMAL1 promoter region. Interacts with CRY1. Interacts with CCAR2. Interacts with SIAH2. Interacts with FBXW7 and CDK1. Interacts with HUWE1. Interacts with NR0B2. Interacts with NFIL3. Interacts (via domain NR LBD) with HSP90AA1 and HSP90AB1. In terms of processing, ubiquitinated, leading to its proteasomal degradation. Ubiquitinated by the SCF(FBXW7) complex when phosphorylated by CDK1 leading to its proteasomal degradation. Ubiquitinated by SIAH2; leading to its proteasomal degradation. Rapidly ubiquitinated in response to inflammatory triggers and sumoylation is a prerequisite to its ubiquitination. Post-translationally, sumoylated by UBE2I, desumoylated by SENP1, and sumoylation is a prerequisite to its ubiquitination. Phosphorylated by CSNK1E; phosphorylation enhances its cytoplasmic localization. In terms of processing, undergoes lysosome-mediated degradation in a time-dependent manner in the liver.

It is found in the nucleus. Its subcellular location is the cytoplasm. It localises to the cell projection. The protein localises to the dendrite. The protein resides in the dendritic spine. Its function is as follows. Transcriptional repressor which coordinates circadian rhythm and metabolic pathways in a heme-dependent manner. Integral component of the complex transcription machinery that governs circadian rhythmicity and forms a critical negative limb of the circadian clock by directly repressing the expression of core clock components BMAL1, CLOCK and CRY1. Also regulates genes involved in metabolic functions, including lipid and bile acid metabolism, adipogenesis, gluconeogenesis and the macrophage inflammatory response. Acts as a receptor for heme which stimulates its interaction with the NCOR1/HDAC3 corepressor complex, enhancing transcriptional repression. Recognizes two classes of DNA response elements within the promoter of its target genes and can bind to DNA as either monomers or homodimers, depending on the nature of the response element. Binds as a monomer to a response element composed of the consensus half-site motif 5'-[A/G]GGTCA-3' preceded by an A/T-rich 5' sequence (RevRE), or as a homodimer to a direct repeat of the core motif spaced by two nucleotides (RevDR-2). Acts as a potent competitive repressor of ROR alpha (RORA) function and regulates the levels of its ligand heme by repressing the expression of PPARGC1A, a potent inducer of heme synthesis. Regulates lipid metabolism by repressing the expression of APOC3 and by influencing the activity of sterol response element binding proteins (SREBPs); represses INSIG2 which interferes with the proteolytic activation of SREBPs which in turn govern the rhythmic expression of enzymes with key functions in sterol and fatty acid synthesis. Regulates gluconeogenesis via repression of G6PC1 and PEPCK and adipocyte differentiation via repression of PPARG. Regulates glucagon release in pancreatic alpha-cells via the AMPK-NAMPT-SIRT1 pathway and the proliferation, glucose-induced insulin secretion and expression of key lipogenic genes in pancreatic-beta cells. Positively regulates bile acid synthesis by increasing hepatic expression of CYP7A1 via repression of NR0B2 and NFIL3 which are negative regulators of CYP7A1. Modulates skeletal muscle oxidative capacity by regulating mitochondrial biogenesis and autophagy; controls mitochondrial biogenesis and respiration by interfering with the STK11-PRKAA1/2-SIRT1-PPARGC1A signaling pathway. Represses the expression of SERPINE1/PAI1, an important modulator of cardiovascular disease and the expression of inflammatory cytokines and chemokines in macrophages. Represses gene expression at a distance in macrophages by inhibiting the transcription of enhancer-derived RNAs (eRNAs). Plays a role in the circadian regulation of body temperature and negatively regulates thermogenic transcriptional programs in brown adipose tissue (BAT); imposes a circadian oscillation in BAT activity, increasing body temperature when awake and depressing thermogenesis during sleep. In concert with NR2E3, regulates transcriptional networks critical for photoreceptor development and function. In addition to its activity as a repressor, can also act as a transcriptional activator. In the ovarian granulosa cells acts as a transcriptional activator of STAR which plays a role in steroid biosynthesis. In collaboration with SP1, activates GJA1 transcription in a heme-independent manner. Represses the transcription of CYP2B10, CYP4A10 and CYP4A14. Represses the transcription of CES2. Represses and regulates the circadian expression of TSHB in a NCOR1-dependent manner. Negatively regulates the protein stability of NR3C1 and influences the time-dependent subcellular distribution of NR3C1, thereby affecting its transcriptional regulatory activity. Plays a critical role in the circadian control of neutrophilic inflammation in the lung; under resting, non-stress conditions, acts as a rhythmic repressor to limit inflammatory activity whereas in the presence of inflammatory triggers undergoes ubiquitin-mediated degradation thereby relieving inhibition of the inflammatory response. Plays a key role in the circadian regulation of microglial activation and neuroinflammation; suppresses microglial activation through the NF-kappaB pathway in the central nervous system. Plays a role in the regulation of the diurnal rhythms of lipid and protein metabolism in the skeletal muscle via transcriptional repression of genes controlling lipid and amino acid metabolism in the muscle. The polypeptide is Nuclear receptor subfamily 1 group D member 1 (Nr1d1) (Rattus norvegicus (Rat)).